A 179-amino-acid chain; its full sequence is Inner membrane-spanning protein YciB (179 aa).

Transmembrane regions (helical) follow at residues 24–44, 49–69, 76–96, 121–141, and 151–171; these read TATG…YAME, AMQK…LVLH, WKPT…LWAL, VAWI…AAYF, and LWGY…ISPH.

The protein belongs to the YciB family.

The protein resides in the cell inner membrane. In terms of biological role, plays a role in cell envelope biogenesis, maintenance of cell envelope integrity and membrane homeostasis. This chain is Inner membrane-spanning protein YciB, found in Variovorax paradoxus (strain S110).